A 424-amino-acid chain; its full sequence is Serine--tRNA ligase (424 aa).

229 to 231 (TAE) provides a ligand contact to L-serine. 260–262 (RRE) provides a ligand contact to ATP. Residue Glu-283 coordinates L-serine. 347–350 (EVSS) contributes to the ATP binding site. Position 383 (Ser-383) interacts with L-serine.

The protein belongs to the class-II aminoacyl-tRNA synthetase family. Type-1 seryl-tRNA synthetase subfamily. In terms of assembly, homodimer. The tRNA molecule binds across the dimer.

It localises to the cytoplasm. The catalysed reaction is tRNA(Ser) + L-serine + ATP = L-seryl-tRNA(Ser) + AMP + diphosphate + H(+). It catalyses the reaction tRNA(Sec) + L-serine + ATP = L-seryl-tRNA(Sec) + AMP + diphosphate + H(+). The protein operates within aminoacyl-tRNA biosynthesis; selenocysteinyl-tRNA(Sec) biosynthesis; L-seryl-tRNA(Sec) from L-serine and tRNA(Sec): step 1/1. Functionally, catalyzes the attachment of serine to tRNA(Ser). Is also able to aminoacylate tRNA(Sec) with serine, to form the misacylated tRNA L-seryl-tRNA(Sec), which will be further converted into selenocysteinyl-tRNA(Sec). In Roseiflexus castenholzii (strain DSM 13941 / HLO8), this protein is Serine--tRNA ligase.